We begin with the raw amino-acid sequence, 73 residues long: Large ribosomal subunit protein bL31 (73 aa).

Positions 16, 18, 38, and 41 each coordinate Zn(2+).

It belongs to the bacterial ribosomal protein bL31 family. Type A subfamily. As to quaternary structure, part of the 50S ribosomal subunit. Zn(2+) is required as a cofactor.

Binds the 23S rRNA. The sequence is that of Large ribosomal subunit protein bL31 from Vibrio vulnificus (strain CMCP6).